The primary structure comprises 602 residues: Probable beta-glucosidase btgE (602 aa).

A signal peptide spans 1–18 (MRGAFLAAAAAVAGTAMA). Disordered stretches follow at residues 61–94 (PPTL…SVVT) and 116–166 (GVDA…TSFS). Low complexity predominate over residues 74–94 (PSSSSSSEVPSVPSSESSVVT). Polar residues predominate over residues 152–166 (TSESPLPTPGVTSFS). Glutamate 443 acts as the Proton donor in catalysis. Glutamate 538 (nucleophile) is an active-site residue.

It belongs to the glycosyl hydrolase 17 family.

Its subcellular location is the secreted. The protein localises to the cell wall. The catalysed reaction is Hydrolysis of terminal, non-reducing beta-D-glucosyl residues with release of beta-D-glucose.. Its pathway is glycan metabolism; cellulose degradation. In terms of biological role, beta-glucosidases are one of a number of cellulolytic enzymes involved in the degradation of cellulosic biomass. Catalyzes the last step releasing glucose from the inhibitory cellobiose. The chain is Probable beta-glucosidase btgE (btgE) from Aspergillus flavus (strain ATCC 200026 / FGSC A1120 / IAM 13836 / NRRL 3357 / JCM 12722 / SRRC 167).